The following is a 203-amino-acid chain: 5-formyltetrahydrofolate cyclo-ligase (203 aa).

Ala-2 is modified (N-acetylalanine). Residues 10–14 (KRSLR) and Arg-14 contribute to the ATP site. Residues Leu-56, Glu-61, and 148 to 152 (RGKGY) contribute to the substrate site. Residue 145–153 (RLGRGKGYY) participates in ATP binding. Residues Asp-154 and Asp-189 each coordinate Mg(2+).

Belongs to the 5-formyltetrahydrofolate cyclo-ligase family. As to quaternary structure, monomer. Mg(2+) is required as a cofactor.

It is found in the cytoplasm. It carries out the reaction (6S)-5-formyl-5,6,7,8-tetrahydrofolate + ATP = (6R)-5,10-methenyltetrahydrofolate + ADP + phosphate. Contributes to tetrahydrofolate metabolism. Helps regulate carbon flow through the folate-dependent one-carbon metabolic network that supplies carbon for the biosynthesis of purines, thymidine and amino acids. Catalyzes the irreversible conversion of 5-formyltetrahydrofolate (5-FTHF) to yield 5,10-methenyltetrahydrofolate. In Homo sapiens (Human), this protein is 5-formyltetrahydrofolate cyclo-ligase (MTHFS).